We begin with the raw amino-acid sequence, 798 residues long: Probable G-protein coupled receptor 156 (798 aa).

The Extracellular portion of the chain corresponds to 1-49 (MEPEINCSEFCDSFPGQELDRRPLHDLCKTTITESQHSSTAASPLSPAL). Asn6 carries N-linked (GlcNAc...) asparagine glycosylation. Residues 50–70 (LGIMWTFLSCGLLLVLFFLAF) form a helical membrane-spanning segment. The Cytoplasmic portion of the chain corresponds to 71–86 (TIRCRKNRIVKMSSPN). Residues 87–107 (LNVVTLLGSCLTYISAYLFGI) form a helical membrane-spanning segment. The Extracellular segment spans residues 108–118 (QDALEGSSVEA). The helical transmembrane segment at 119-139 (LIQTRLSLLCIGTSLVFGPIL) threads the bilayer. Residues 140 to 164 (GKSWRLYKVFTQRVPDKRVIIKDLQ) lie on the Cytoplasmic side of the membrane. Residues 165–185 (LLGLVAALVVADVILLVTWVL) traverse the membrane as a helical segment. Over 186-222 (TDPIQCLQMLGVSMKVTGRDVSCSLTNTHFCASRYSD) the chain is Extracellular. Residues 223-243 (VWIALVLGCKGLLLLYGAYLA) traverse the membrane as a helical segment. At 244-257 (GLTNHVSSPPVNQS) the chain is on the cytoplasmic side. The helical transmembrane segment at 258–278 (LTIMVGVNLLLLTAGLLFVVT) threads the bilayer. Over 279–288 (RYLHSWPNLV) the chain is Extracellular. A helical transmembrane segment spans residues 289 to 309 (FGLTSGGIFVCTTTVNCCVFI). At 310-798 (PQLKQWKAFE…FKDDLKPTLV (489 aa)) the chain is on the cytoplasmic side. Positions 353-390 (DEKSCMERLLTEKNAVIESLQEQVSNAKEKLVKLMSAE) form a coiled coil. 3 disordered regions span residues 441–497 (HVQG…PMAP), 546–666 (SEAP…KQCE), and 693–715 (PAAP…PRLS). Positions 479-492 (PKAEQSEGPERGDQ) are enriched in basic and acidic residues. Residues 559–572 (LWKSTTSRSPQKLS) are compositionally biased toward polar residues. Over residues 583–594 (VRRRRAAQRARS) the composition is skewed to basic residues. Polar residues predominate over residues 606–624 (HQANSTVSSSQSGLIVQNR). A compositionally biased stretch (low complexity) spans 639-648 (PRSSSVKPSP).

This sequence belongs to the G-protein coupled receptor 3 family. GABA-B receptor subfamily. As to expression, expressed in the outer and inner hair cells of the organ of Corti (at protein level). Expressed in the utricle and saccule within the vestibule (at protein level).

It is found in the cell membrane. It localises to the postsynaptic cell membrane. Its function is as follows. Orphan G-protein coupled receptor involved in the regulation of hair cell orientation in mechanosensory organs of the inner ear. It is required to trigger a 180 degree reversal in hair cell orientation, creating a virtual line of polarity reversal (LPR) across which stereociliary bundles are arranged in opposite orientations. This Mus musculus (Mouse) protein is Probable G-protein coupled receptor 156 (Gpr156).